The chain runs to 420 residues: MEKFRVYGQSTLSGDVQISGAKNAALPILFATILAEEPVKLTNVPELKDVDTTFEILRKLGVVVERTDEQTVLIDASRIDRYVAPYELVKTMRASIWALAPLLTRFREGQVSLPGGCTIGARPVDMHISGLEKMGAAIELDEGYVKATVNGRLTGTRIYMDKVSVGATLSLIMAATLAEGVTTIENAAREPEIVDTADFLNKMGAKISGAGTDTISIEGVSRLAGCEHSIVPDRIETGTFLIAAAISGGRITCHNTKADTLDAVIEKLREAGMQVDVTENTITLDSLGQRPKAVNIRTMPHPGFPTDMQAQFTLLNVVAEGTSKITETIFENRFMHVPELIRMGAKGEIEGNTAIIHGVESLSGAQVMATDLRASISLVLAGCIASGETVVDRIYHIDRGYEHIEDKLRGLGARIERFSE.

A phosphoenolpyruvate-binding site is contributed by 22 to 23; it reads KN. Arg93 contributes to the UDP-N-acetyl-alpha-D-glucosamine binding site. The Proton donor role is filled by Cys117. Cys117 carries the post-translational modification 2-(S-cysteinyl)pyruvic acid O-phosphothioketal. UDP-N-acetyl-alpha-D-glucosamine-binding positions include 162–165, Asp307, and Ile329; that span reads KVSV.

Belongs to the EPSP synthase family. MurA subfamily.

The protein resides in the cytoplasm. The catalysed reaction is phosphoenolpyruvate + UDP-N-acetyl-alpha-D-glucosamine = UDP-N-acetyl-3-O-(1-carboxyvinyl)-alpha-D-glucosamine + phosphate. Its pathway is cell wall biogenesis; peptidoglycan biosynthesis. Its function is as follows. Cell wall formation. Adds enolpyruvyl to UDP-N-acetylglucosamine. This is UDP-N-acetylglucosamine 1-carboxyvinyltransferase from Actinobacillus succinogenes (strain ATCC 55618 / DSM 22257 / CCUG 43843 / 130Z).